We begin with the raw amino-acid sequence, 308 residues long: Putative lipid kinase SH2167 (308 aa).

In terms of domain architecture, DAGKc spans 1–139 (MGQKFNHGVL…YDVMKVNGTY (139 aa)). Residues S44, 74–80 (GDGTVNE), and T101 contribute to the ATP site. Residues S220, D223, and K225 each contribute to the Mg(2+) site. E281 functions as the Proton acceptor in the catalytic mechanism.

The protein belongs to the diacylglycerol/lipid kinase family. Mg(2+) serves as cofactor.

Functionally, may catalyze the ATP-dependent phosphorylation of lipids other than diacylglycerol (DAG). The sequence is that of Putative lipid kinase SH2167 from Staphylococcus haemolyticus (strain JCSC1435).